The chain runs to 841 residues: ATP-dependent helicase Lhr-Core (841 aa).

Glutamine 39, lysine 62, threonine 63, aspartate 181, glutamate 182, isoleucine 352, arginine 369, and histidine 372 together coordinate ATP. Residues 43–234 form the Helicase ATP-binding domain; that stretch reads IKEIHEGKNV…FLVGNGRDCY (192 aa). The DEVH box motif lies at 181–184; the sequence is DEIH. Positions 266–416 constitute a Helicase C-terminal domain; it reads RLYNLLKKLI…RIHIPKNCLD (151 aa). Positions 417–500 are WH domain; it reads VLAQHLVGMA…IYYMNVGTIP (84 aa). A domain 4 region spans residues 501 to 841; it reads DETAVDVIAD…MEFISMKGKK (341 aa).

The protein belongs to the Lhr helicase family. Lhr-Core subfamily. Monomer.

It catalyses the reaction Couples ATP hydrolysis with the unwinding of duplex DNA by translocating in the 3'-5' direction.. It carries out the reaction ATP + H2O = ADP + phosphate + H(+). In terms of biological role, DNA helicase that loads on single-stranded (ss)DNA and translocates in a 3'-5' direction, probably involved in DNA repair. Archaeal orthologs have double-stranded (ds)DNA and/or RNA:DNA helicase activity. This is ATP-dependent helicase Lhr-Core from Methanocaldococcus jannaschii (strain ATCC 43067 / DSM 2661 / JAL-1 / JCM 10045 / NBRC 100440) (Methanococcus jannaschii).